The chain runs to 433 residues: ATP-dependent protease ATPase subunit HslU (433 aa).

Residues Ile-18, 60–65 (GVGKTE), Asp-246, Glu-311, and Arg-383 each bind ATP.

Belongs to the ClpX chaperone family. HslU subfamily. As to quaternary structure, a double ring-shaped homohexamer of HslV is capped on each side by a ring-shaped HslU homohexamer. The assembly of the HslU/HslV complex is dependent on binding of ATP.

Its subcellular location is the cytoplasm. Functionally, ATPase subunit of a proteasome-like degradation complex; this subunit has chaperone activity. The binding of ATP and its subsequent hydrolysis by HslU are essential for unfolding of protein substrates subsequently hydrolyzed by HslV. HslU recognizes the N-terminal part of its protein substrates and unfolds these before they are guided to HslV for hydrolysis. The protein is ATP-dependent protease ATPase subunit HslU of Cereibacter sphaeroides (strain ATCC 17025 / ATH 2.4.3) (Rhodobacter sphaeroides).